Consider the following 673-residue polypeptide: Citrate exporter 1 (673 aa).

Positions M1 to L44 are disordered. Polar residues predominate over residues S21–N39. A helical membrane pass occupies residues F67–I87. N99 carries N-linked (GlcNAc...) asparagine glycosylation. A run of 4 helical transmembrane segments spans residues T103–G123, L133–Q153, F164–V184, and G194–F214. N-linked (GlcNAc...) asparagine glycosylation is present at N217. A run of 8 helical transmembrane segments spans residues A222 to L242, P261 to G281, I292 to F312, I322 to Y342, A364 to Q384, L393 to W413, M419 to P439, and S465 to A485. N526 carries an N-linked (GlcNAc...) asparagine glycan. Residues H529–V549 form a helical membrane-spanning segment. Residues A564–L596 are compositionally biased toward basic and acidic residues. Disordered stretches follow at residues A564 to G608 and F636 to E673. N-linked (GlcNAc...) asparagine glycans are attached at residues N599 and N662.

Belongs to the major facilitator superfamily.

The protein localises to the cell membrane. It catalyses the reaction citrate(in) = citrate(out). Transmembrane transporter that exports citrate across the cell membrane. The polypeptide is Citrate exporter 1 (Yarrowia lipolytica (strain CLIB 122 / E 150) (Yeast)).